A 470-amino-acid polypeptide reads, in one-letter code: Siroheme synthase (470 aa).

Residues 1–203 (MEFFPIFLKL…GDEAAARAEM (203 aa)) form a precorrin-2 dehydrogenase /sirohydrochlorin ferrochelatase region. NAD(+) is bound by residues 22–23 (EV) and 43–44 (PE). Serine 128 carries the phosphoserine modification. The uroporphyrinogen-III C-methyltransferase stretch occupies residues 216–470 (GAVYLVGAGP…ENSAVTIQED (255 aa)). S-adenosyl-L-methionine is bound at residue proline 225. Aspartate 248 functions as the Proton acceptor in the catalytic mechanism. Lysine 270 functions as the Proton donor in the catalytic mechanism. S-adenosyl-L-methionine-binding positions include 301–303 (GGD), methionine 383, and alanine 412.

The protein in the N-terminal section; belongs to the precorrin-2 dehydrogenase / sirohydrochlorin ferrochelatase family. This sequence in the C-terminal section; belongs to the precorrin methyltransferase family.

The catalysed reaction is uroporphyrinogen III + 2 S-adenosyl-L-methionine = precorrin-2 + 2 S-adenosyl-L-homocysteine + H(+). It carries out the reaction precorrin-2 + NAD(+) = sirohydrochlorin + NADH + 2 H(+). It catalyses the reaction siroheme + 2 H(+) = sirohydrochlorin + Fe(2+). It functions in the pathway cofactor biosynthesis; adenosylcobalamin biosynthesis; precorrin-2 from uroporphyrinogen III: step 1/1. Its pathway is cofactor biosynthesis; adenosylcobalamin biosynthesis; sirohydrochlorin from precorrin-2: step 1/1. It participates in porphyrin-containing compound metabolism; siroheme biosynthesis; precorrin-2 from uroporphyrinogen III: step 1/1. The protein operates within porphyrin-containing compound metabolism; siroheme biosynthesis; siroheme from sirohydrochlorin: step 1/1. It functions in the pathway porphyrin-containing compound metabolism; siroheme biosynthesis; sirohydrochlorin from precorrin-2: step 1/1. In terms of biological role, multifunctional enzyme that catalyzes the SAM-dependent methylations of uroporphyrinogen III at position C-2 and C-7 to form precorrin-2 via precorrin-1. Then it catalyzes the NAD-dependent ring dehydrogenation of precorrin-2 to yield sirohydrochlorin. Finally, it catalyzes the ferrochelation of sirohydrochlorin to yield siroheme. The sequence is that of Siroheme synthase from Chromobacterium violaceum (strain ATCC 12472 / DSM 30191 / JCM 1249 / CCUG 213 / NBRC 12614 / NCIMB 9131 / NCTC 9757 / MK).